Reading from the N-terminus, the 88-residue chain is Small ribosomal subunit protein bS16c (88 aa).

This sequence belongs to the bacterial ribosomal protein bS16 family.

It is found in the plastid. The protein resides in the chloroplast. The polypeptide is Small ribosomal subunit protein bS16c (Calycanthus floridus var. glaucus (Eastern sweetshrub)).